The primary structure comprises 542 residues: CTP synthase (542 aa).

The tract at residues 1–265 (MARYVFITGG…DSEVLSAFGM (265 aa)) is amidoligase domain. S13 serves as a coordination point for CTP. S13 provides a ligand contact to UTP. Position 14-19 (14-19 (SLGKGI)) interacts with ATP. Y54 is an L-glutamine binding site. D71 lines the ATP pocket. 2 residues coordinate Mg(2+): D71 and E139. Residues 146 to 148 (DIE), 186 to 191 (KTKPTQ), and K222 each bind CTP. Residues 186–191 (KTKPTQ) and K222 each bind UTP. Residues 291–541 (TIAVVGKYTG…IEATVEQSRL (251 aa)) enclose the Glutamine amidotransferase type-1 domain. Position 353 (A353) interacts with L-glutamine. The active-site Nucleophile; for glutamine hydrolysis is C380. Residues 381–384 (FGMQ), E404, and R469 each bind L-glutamine. Residues H514 and E516 contribute to the active site.

This sequence belongs to the CTP synthase family. In terms of assembly, homotetramer.

It catalyses the reaction UTP + L-glutamine + ATP + H2O = CTP + L-glutamate + ADP + phosphate + 2 H(+). It carries out the reaction L-glutamine + H2O = L-glutamate + NH4(+). The enzyme catalyses UTP + NH4(+) + ATP = CTP + ADP + phosphate + 2 H(+). Its pathway is pyrimidine metabolism; CTP biosynthesis via de novo pathway; CTP from UDP: step 2/2. Its activity is regulated as follows. Allosterically activated by GTP, when glutamine is the substrate; GTP has no effect on the reaction when ammonia is the substrate. The allosteric effector GTP functions by stabilizing the protein conformation that binds the tetrahedral intermediate(s) formed during glutamine hydrolysis. Inhibited by the product CTP, via allosteric rather than competitive inhibition. Catalyzes the ATP-dependent amination of UTP to CTP with either L-glutamine or ammonia as the source of nitrogen. Regulates intracellular CTP levels through interactions with the four ribonucleotide triphosphates. The protein is CTP synthase of Bartonella henselae (strain ATCC 49882 / DSM 28221 / CCUG 30454 / Houston 1) (Rochalimaea henselae).